The sequence spans 396 residues: Deoxyuridine 5'-triphosphate nucleotidohydrolase (396 aa).

Residues 280–282 and 380–381 each bind substrate; these read RSS and FG.

It belongs to the dUTPase family. The cofactor is Mg(2+).

The catalysed reaction is dUTP + H2O = dUMP + diphosphate + H(+). Its function is as follows. Involved in nucleotide metabolism: produces dUMP, the immediate precursor of thymidine nucleotides and decreases the intracellular concentration of dUTP to avoid uracil incorporation into viral DNA. This Homo sapiens (Human) protein is Deoxyuridine 5'-triphosphate nucleotidohydrolase.